We begin with the raw amino-acid sequence, 254 residues long: Large ribosomal subunit protein uL4 (254 aa).

Belongs to the universal ribosomal protein uL4 family. In terms of assembly, part of the 50S ribosomal subunit.

Its function is as follows. One of the primary rRNA binding proteins, this protein initially binds near the 5'-end of the 23S rRNA. It is important during the early stages of 50S assembly. It makes multiple contacts with different domains of the 23S rRNA in the assembled 50S subunit and ribosome. Forms part of the polypeptide exit tunnel. The protein is Large ribosomal subunit protein uL4 of Methanothermobacter thermautotrophicus (strain ATCC 29096 / DSM 1053 / JCM 10044 / NBRC 100330 / Delta H) (Methanobacterium thermoautotrophicum).